We begin with the raw amino-acid sequence, 308 residues long: Elongation factor Ts (308 aa).

The interval 80–83 (TDFV) is involved in Mg(2+) ion dislocation from EF-Tu.

This sequence belongs to the EF-Ts family.

The protein localises to the cytoplasm. In terms of biological role, associates with the EF-Tu.GDP complex and induces the exchange of GDP to GTP. It remains bound to the aminoacyl-tRNA.EF-Tu.GTP complex up to the GTP hydrolysis stage on the ribosome. The protein is Elongation factor Ts of Rhizobium rhizogenes (strain K84 / ATCC BAA-868) (Agrobacterium radiobacter).